The following is a 118-amino-acid chain: MKKIKSFGGKSLGGGKQEKILKDFARMQEELQKKIQELEESFSQIEVEASVGGGAVRIVATCDRRVKDIEIDEDLKEDFDTLKDLLIAGMNEVMEKIEKRREEEMSKITQQFGIPGLM.

The protein belongs to the YbaB/EbfC family. In terms of assembly, homodimer.

It is found in the cytoplasm. The protein localises to the nucleoid. Functionally, binds to DNA and alters its conformation. May be involved in regulation of gene expression, nucleoid organization and DNA protection. The chain is Nucleoid-associated protein TM_0687 from Thermotoga maritima (strain ATCC 43589 / DSM 3109 / JCM 10099 / NBRC 100826 / MSB8).